The following is a 199-amino-acid chain: Probable chemoreceptor glutamine deamidase CheD (199 aa).

It belongs to the CheD family.

It carries out the reaction L-glutaminyl-[protein] + H2O = L-glutamyl-[protein] + NH4(+). Functionally, probably deamidates glutamine residues to glutamate on methyl-accepting chemotaxis receptors (MCPs), playing an important role in chemotaxis. In Cereibacter sphaeroides (Rhodobacter sphaeroides), this protein is Probable chemoreceptor glutamine deamidase CheD.